A 359-amino-acid polypeptide reads, in one-letter code: Phospho-N-acetylmuramoyl-pentapeptide-transferase (359 aa).

10 helical membrane passes run 3–23 (QIMI…PALI), 55–75 (VAIL…GLAF), 80–100 (ITAS…VGFL), 117–137 (TAKT…VLQF), 156–176 (IATV…VVSA), 187–207 (LDGL…LITF), 231–251 (LALI…WNAA), 255–275 (IFMG…LSVT), 280–300 (ILAV…VLQI), and 334–354 (FWLL…GEWL).

It belongs to the glycosyltransferase 4 family. MraY subfamily. Mg(2+) is required as a cofactor.

Its subcellular location is the cell inner membrane. The enzyme catalyses UDP-N-acetyl-alpha-D-muramoyl-L-alanyl-gamma-D-glutamyl-meso-2,6-diaminopimeloyl-D-alanyl-D-alanine + di-trans,octa-cis-undecaprenyl phosphate = di-trans,octa-cis-undecaprenyl diphospho-N-acetyl-alpha-D-muramoyl-L-alanyl-D-glutamyl-meso-2,6-diaminopimeloyl-D-alanyl-D-alanine + UMP. The protein operates within cell wall biogenesis; peptidoglycan biosynthesis. Catalyzes the initial step of the lipid cycle reactions in the biosynthesis of the cell wall peptidoglycan: transfers peptidoglycan precursor phospho-MurNAc-pentapeptide from UDP-MurNAc-pentapeptide onto the lipid carrier undecaprenyl phosphate, yielding undecaprenyl-pyrophosphoryl-MurNAc-pentapeptide, known as lipid I. The polypeptide is Phospho-N-acetylmuramoyl-pentapeptide-transferase (Mycobacterium marinum (strain ATCC BAA-535 / M)).